A 342-amino-acid polypeptide reads, in one-letter code: P21 prophage-derived major head protein (342 aa).

It belongs to the lambda phage major capsid protein family.

In Escherichia coli O6:H1 (strain CFT073 / ATCC 700928 / UPEC), this protein is P21 prophage-derived major head protein.